The sequence spans 737 residues: Genome polyprotein (737 aa).

N-acetylserine; by host is present on serine 2. Residues 2 to 23 form an interaction with STAT1 region; that stretch reads STNPKPQRKTKRNTNRRPQDVK. Residues 2–58 are interaction with EIF2AK2/PKR; sequence STNPKPQRKTKRNTNRRPQDVKFPGGGQIVGGVYLLPRRGPRLGVRATRKTSERSQP. An interaction with DDX3X region spans residues 2–59; sequence STNPKPQRKTKRNTNRRPQDVKFPGGGQIVGGVYLLPRRGPRLGVRATRKTSERSQPR. The disordered stretch occupies residues 2–75; sequence STNPKPQRKT…PKDRRSTGKS (74 aa). The Cytoplasmic portion of the chain corresponds to 2 to 168; sequence STNPKPQRKT…EDGINYATGN (167 aa). Short sequence motifs (nuclear localization signal) lie at residues 5 to 13 and 38 to 43; these read PKPQRKTKR and PRRGPR. Basic residues predominate over residues 7-16; the sequence is PQRKTKRNTN. Low complexity predominate over residues 32-47; it reads GGVYLLPRRGPRLGVR. Serine 53 bears the Phosphoserine; by host mark. 2 short sequence motifs (nuclear localization signal) span residues 58-64 and 66-71; these read PRGRRQP and PKDRRS. Phosphoserine; by host occurs at positions 99 and 116. The important for endoplasmic reticulum and mitochondrial localization stretch occupies residues 112-152; the sequence is PRHRSRNLGKVIDTLTCGFADLMGYIPVVGAPVGGVARALA. The interval 122–173 is interaction with APOA2; it reads VIDTLTCGFADLMGYIPVVGAPVGGVARALAHGVRVLEDGINYATGNLPGCS. Residues 164 to 167 are important for lipid droplets localization; the sequence is YATG. Residues 169 to 189 traverse the membrane as a helical segment; it reads LPGCSFSIFLLALLSCVTVPV. A propeptide spans 178–191 (ER anchor for the core protein, removed in mature form by host signal peptidase); that stretch reads LLALLSCVTVPVSA. Topologically, residues 190 to 358 are lumenal; sequence SAVEVRNISS…FGGHWGVVFG (169 aa). N-linked (GlcNAc...) asparagine; by host glycosylation is found at asparagine 196, asparagine 209, and asparagine 233. The segment at 265-296 is important for fusion; that stretch reads IVMAATVCSALYVGDICGAVMIASQAFIISPE. N-linked (GlcNAc...) asparagine; by host glycosylation occurs at asparagine 305. A helical transmembrane segment spans residues 359–379; that stretch reads LAYFSMQGAWAKVIAILLLVA. The Lumenal segment spans residues 380–729; sequence GVDASTQVTG…WEWVILLFLL (350 aa). Residues 385–411 are HVR1; that stretch reads TQVTGGQAAHTVRGVASIFSPGSRQDI. 4 N-linked (GlcNAc...) (high mannose) asparagine; by host glycosylation sites follow: asparagine 417, asparagine 423, asparagine 430, and asparagine 448. 4 cysteine pairs are disulfide-bonded: cysteine 429–cysteine 554, cysteine 452–cysteine 459, cysteine 488–cysteine 496, and cysteine 505–cysteine 510. The segment at 474–481 is HVR2; the sequence is YETNVTNE. Residues 482–495 form a CD81-binding 1 region; the sequence is EDMRPYCWHYPPKP. Asparagine 542 is a glycosylation site (N-linked (GlcNAc...) asparagine; by host). Positions 546-553 are CD81-binding 2; sequence PPRGAWFG. Asparagine 558 is a glycosylation site (N-linked (GlcNAc...) (high mannose) asparagine; by host). Cystine bridges form between cysteine 566/cysteine 571, cysteine 585/cysteine 589, cysteine 601/cysteine 624, and cysteine 611/cysteine 648. N-linked (GlcNAc...) (high mannose) asparagine; by host glycans are attached at residues asparagine 627 and asparagine 649. Cysteine 656 and cysteine 681 are joined by a disulfide. The interval 664–675 is PKR/eIF2-alpha phosphorylation homology domain (PePHD); that stretch reads SQQSPLLHSTTE. Residues 730 to 737 form a helical membrane-spanning segment; that stretch reads LADARVCA.

The protein belongs to the hepacivirus polyprotein family. In terms of assembly, homooligomer. Interacts with E1 (via C-terminus). Interacts with the non-structural protein 5A. Interacts (via N-terminus) with host STAT1 (via SH2 domain); this interaction results in decreased STAT1 phosphorylation and ubiquitin-mediated proteasome-dependent STAT1 degradation, leading to decreased IFN-stimulated gene transcription. Interacts with host STAT3; this interaction constitutively activates STAT3. Interacts with host LTBR receptor. Interacts with host TNFRSF1A receptor and possibly induces apoptosis. Interacts with host HNRPK. Interacts with host YWHAE. Interacts with host UBE3A/E6AP. Interacts with host DDX3X. Interacts with host APOA2. Interacts with host RXRA protein. Interacts with host SP110 isoform 3/Sp110b; this interaction sequesters the transcriptional corepressor SP110 away from the nucleus. Interacts with host CREB3 nuclear transcription protein; this interaction triggers cell transformation. Interacts with host ACY3. Interacts with host C1QR1. Interacts with host RBM24; this interaction, which enhances the interaction of the mature core protein with 5'-UTR, may inhibit viral translation and favor replication. Interacts with host EIF2AK2/PKR; this interaction induces the autophosphorylation of EIF2AK2. Part of the viral assembly initiation complex composed of NS2, E1, E2, NS3, NS4A, NS5A and the mature core protein. As to quaternary structure, forms a heterodimer with envelope glycoprotein E2. Interacts with mature core protein. Interacts with protease NS2. The heterodimer E1/E2 interacts with host CLDN1; this interaction plays a role in viral entry into host cell. Interacts with host SPSB2 (via C-terminus). Part of the viral assembly initiation complex composed of NS2, E1, E2, NS3, NS4A, NS5A and the mature core protein. Forms a heterodimer with envelope glycoprotein E1. Interacts with host CD81 and SCARB1 receptors; these interactions play a role in viral entry into host cell. Interacts with host EIF2AK2/PKR; this interaction inhibits EIF2AK2 and probably allows the virus to evade the innate immune response. Interacts with host CD209/DC-SIGN and CLEC4M/DC-SIGNR. Interact with host SPCS1; this interaction is essential for viral particle assembly. Interacts with protease NS2. The heterodimer E1/E2 interacts with host CLDN1; this interaction plays a role in viral entry into host cell. Part of the viral assembly initiation complex composed of NS2, E1, E2, NS3, NS4A, NS5A and the mature core protein. Post-translationally, specific enzymatic cleavages in vivo yield mature proteins. The structural proteins, core, E1, E2 and p7 are produced by proteolytic processing by host signal peptidases. The core protein precursor is synthesized as a 23 kDa, which is retained in the ER membrane through the hydrophobic signal peptide. Cleavage by the signal peptidase releases the 21 kDa mature core protein. The cleavage of the core protein precursor occurs between aminoacids 176 and 188 but the exact cleavage site is not known. Some degraded forms of the core protein appear as well during the course of infection. The other proteins (p7, NS2, NS3, NS4A, NS4B, NS5A and NS5B) are cleaved by the viral proteases. Autoprocessing between NS2 and NS3 is mediated by the NS2 cysteine protease catalytic domain and regulated by the NS3 N-terminal domain. Phosphorylated by host PKC and PKA. In terms of processing, ubiquitinated; mediated by UBE3A and leading to core protein subsequent proteasomal degradation. Post-translationally, highly N-glycosylated.

The protein resides in the host endoplasmic reticulum membrane. It is found in the host mitochondrion membrane. It localises to the virion. Its subcellular location is the host cytoplasm. The protein localises to the host nucleus. The protein resides in the host lipid droplet. It is found in the virion membrane. Its function is as follows. Packages viral RNA to form a viral nucleocapsid, and promotes virion budding. Participates in the viral particle production as a result of its interaction with the non-structural protein 5A. Binds RNA and may function as a RNA chaperone to induce the RNA structural rearrangements taking place during virus replication. Modulates viral translation initiation by interacting with viral IRES and 40S ribosomal subunit. Affects various cell signaling pathways, host immunity and lipid metabolism. Prevents the establishment of cellular antiviral state by blocking the interferon-alpha/beta (IFN-alpha/beta) and IFN-gamma signaling pathways and by blocking the formation of phosphorylated STAT1 and promoting ubiquitin-mediated proteasome-dependent degradation of STAT1. Activates STAT3 leading to cellular transformation. Regulates the activity of cellular genes, including c-myc and c-fos. May repress the promoter of p53, and sequester CREB3 and SP110 isoform 3/Sp110b in the cytoplasm. Represses cell cycle negative regulating factor CDKN1A, thereby interrupting an important check point of normal cell cycle regulation. Targets transcription factors involved in the regulation of inflammatory responses and in the immune response: suppresses TNF-induced NF-kappa-B activation, and activates AP-1. Binds to dendritic cells (DCs) via C1QR1, resulting in down-regulation of T-lymphocytes proliferation. Alters lipid metabolism by interacting with hepatocellular proteins involved in lipid accumulation and storage. Induces up-regulation of FAS promoter activity, and thereby contributes to the increased triglyceride accumulation in hepatocytes (steatosis). Forms a heterodimer with envelope glycoprotein E2, which mediates virus attachment to the host cell, virion internalization through clathrin-dependent endocytosis and fusion with host membrane. Fusion with the host cell is most likely mediated by both E1 and E2, through conformational rearrangements of the heterodimer required for fusion rather than a classical class II fusion mechanism. E1/E2 heterodimer binds host apolipoproteins such as APOB and ApoE thereby forming a lipo-viro-particle (LVP). APOE associated to the LVP allows the initial virus attachment to cell surface receptors such as the heparan sulfate proteoglycans (HSPGs), syndecan-1 (SDC1), syndecan-1 (SDC2), the low-density lipoprotein receptor (LDLR) and scavenger receptor class B type I (SCARB1). The cholesterol transfer activity of SCARB1 allows E2 exposure and binding of E2 to SCARB1 and the tetraspanin CD81. E1/E2 heterodimer binding on CD81 activates the epithelial growth factor receptor (EGFR) signaling pathway. Diffusion of the complex E1-E2-EGFR-SCARB1-CD81 to the cell lateral membrane allows further interaction with Claudin 1 (CLDN1) and occludin (OCLN) to finally trigger HCV entry. Functionally, forms a heterodimer with envelope glycoprotein E1, which mediates virus attachment to the host cell, virion internalization through clathrin-dependent endocytosis and fusion with host membrane. Fusion with the host cell is most likely mediated by both E1 and E2, through conformational rearrangements of the heterodimer required for fusion rather than a classical class II fusion mechanism. The interaction between envelope glycoprotein E2 and host apolipoprotein E/APOE allows the proper assembly, maturation and infectivity of the viral particles. This interaction is probably promoted via the up-regulation of cellular autophagy by the virus. E1/E2 heterodimer binds host apolipoproteins such as APOB and APOE thereby forming a lipo-viro-particle (LVP). APOE associated to the LVP allows the initial virus attachment to cell surface receptors such as the heparan sulfate proteoglycans (HSPGs), syndecan-1 (SDC1), syndecan-1 (SDC2), the low-density lipoprotein receptor (LDLR) and scavenger receptor class B type I (SCARB1). The cholesterol transfer activity of SCARB1 allows E2 exposure and binding of E2 to SCARB1 and the tetraspanin CD81. E1/E2 heterodimer binding on CD81 activates the epithelial growth factor receptor (EGFR) signaling pathway. Diffusion of the complex E1-E2-EGFR-SCARB1-CD81 to the cell lateral membrane allows further interaction with Claudin 1 (CLDN1) and occludin (OCLN) to finally trigger HCV entry. Inhibits host EIF2AK2/PKR activation, preventing the establishment of an antiviral state. Viral ligand for CD209/DC-SIGN and CLEC4M/DC-SIGNR, which are respectively found on dendritic cells (DCs), and on liver sinusoidal endothelial cells and macrophage-like cells of lymph node sinuses. These interactions allow the capture of circulating HCV particles by these cells and subsequent facilitated transmission to permissive cells such as hepatocytes and lymphocyte subpopulations. The sequence is that of Genome polyprotein from Hepatitis C virus (isolate HC-J7) (HCV).